Here is an 875-residue protein sequence, read N- to C-terminus: Alanine--tRNA ligase (875 aa).

His562, His566, Cys665, and His669 together coordinate Zn(2+).

It belongs to the class-II aminoacyl-tRNA synthetase family. The cofactor is Zn(2+).

The protein resides in the cytoplasm. The enzyme catalyses tRNA(Ala) + L-alanine + ATP = L-alanyl-tRNA(Ala) + AMP + diphosphate. Functionally, catalyzes the attachment of alanine to tRNA(Ala) in a two-step reaction: alanine is first activated by ATP to form Ala-AMP and then transferred to the acceptor end of tRNA(Ala). Also edits incorrectly charged Ser-tRNA(Ala) and Gly-tRNA(Ala) via its editing domain. This chain is Alanine--tRNA ligase, found in Saccharophagus degradans (strain 2-40 / ATCC 43961 / DSM 17024).